Consider the following 438-residue polypeptide: 2-(3-amino-3-carboxypropyl)histidine synthase subunit 1 (438 aa).

The disordered stretch occupies residues 7–29; sequence SGAAEQGGRDGPGRGRAPRGRVA. Residues Cys110, Cys214, and Cys342 each coordinate [4Fe-4S] cluster. The disordered stretch occupies residues 391–421; sequence VNHGQDRRPHAPGRPARGKVQEGSARPPSAV.

It belongs to the DPH1/DPH2 family. DPH1 subfamily. In terms of assembly, component of the 2-(3-amino-3-carboxypropyl)histidine synthase complex composed of DPH1, DPH2, DPH3 and a NADH-dependent reductase. Interacts with DPH2. Interacts with RBM8A. It depends on [4Fe-4S] cluster as a cofactor. In terms of tissue distribution, expressed in heart, brain, placenta, lung, liver, skeletal muscle, kidney, pancreas, spleen, thymus, mammary gland, colon, small intestine, testis and ovary. Reduced expression in primary breast and ovarian tumors.

It is found in the nucleus. It localises to the cytoplasm. The enzyme catalyses L-histidyl-[translation elongation factor 2] + S-adenosyl-L-methionine = 2-[(3S)-amino-3-carboxypropyl]-L-histidyl-[translation elongation factor 2] + S-methyl-5'-thioadenosine + H(+). The protein operates within protein modification; peptidyl-diphthamide biosynthesis. In terms of biological role, catalyzes the first step of diphthamide biosynthesis, a post-translational modification of histidine which occurs in elongation factor 2. DPH1 and DPH2 transfer a 3-amino-3-carboxypropyl (ACP) group from S-adenosyl-L-methionine (SAM) to a histidine residue, the reaction is assisted by a reduction system comprising DPH3 and a NADH-dependent reductase. Acts as a tumor suppressor. The polypeptide is 2-(3-amino-3-carboxypropyl)histidine synthase subunit 1 (Homo sapiens (Human)).